We begin with the raw amino-acid sequence, 1601 residues long: Ras guanine nucleotide exchange factor glfB (1601 aa).

4 disordered regions span residues 43–140 (PLLA…KEWD), 188–256 (DLLI…TTTT), 310–461 (SPQR…APDS), and 475–630 (LTTT…VKKG). The segment covering 45 to 55 (LAPPAPPPPPT) has biased composition (pro residues). The span at 57–69 (QEINIGSGNSTFI) shows a compositional bias: polar residues. The segment covering 70-126 (SSNNNNSNNNNNNNSNNNNNNNLNNSNNNNNNLNSNNNNNNNNNNNNNNGNNNNNSN) has biased composition (low complexity). The residue at position 197 (serine 197) is a Phosphoserine. Threonine 201 is subject to Phosphothreonine. Low complexity-rich tracts occupy residues 211 to 256 (QQQQ…TTTT) and 310 to 330 (SPQRVTTTTTTTTPSTGGVVV). Acidic residues predominate over residues 331–359 (ADEESDSSEEESDSSEEESDEYTDEESET). The segment covering 384 to 398 (PLTSVNSNDNTSSGT) has biased composition (polar residues). Composition is skewed to low complexity over residues 435–458 (TAVAASSISATTNVTSAASTTTVA), 475–493 (LTTTTSATSSTTSATTQSI), and 500–520 (SQQRAAQSISTSSVTPAAITK). The span at 521 to 533 (PTKDAKDKKDPAK) shows a compositional bias: basic and acidic residues. Over residues 558 to 577 (VPTGTSPPVSSSTSISSSTG) the composition is skewed to low complexity. A compositionally biased stretch (basic and acidic residues) spans 578 to 596 (IKKDKVKLSKEEKDRIKKE). In terms of domain architecture, Rho-GAP spans 649-836 (VRLTQLVLSN…LIIDNYVFLF (188 aa)). An N-terminal Ras-GEF domain is found at 851-983 (GKMIISEGSI…TINDFLKLPK (133 aa)). The Ras-GEF domain maps to 1021–1255 (SAMEIAEQCT…ADLSLKCEPP (235 aa)). The tract at residues 1262 to 1601 (YNAPADIVDE…QESVPSTNAE (340 aa)) is N-terminal F-actin-binding domain. The tract at residues 1443–1474 (SNVEKEKLSSSQEQQEQQEQKQQEQQQQQQEP) is disordered. A compositionally biased stretch (low complexity) spans 1465–1474 (QEQQQQQQEP).

Interacts with gpaB and rapA. Interacts directly with F-actin. Simultaneously phosphorylated at Ser-197 and Thr-201 after cAMP stimulation.

It is found in the cytoplasm. The protein localises to the cell cortex. The protein resides in the cytoskeleton. It localises to the cell projection. Its subcellular location is the filopodium. It is found in the lamellipodium. In terms of biological role, gpaB-activated, rapA-specific guanine nucleotide exchange factor, involved in the regulation of the balance between Ras and Rap signaling at the leading edge of chemotaxing cells. Spatially localized activation of Rap and Ras induces F-actin polymerization at the leading edge of chemotaxing cells through the Rac, PI3K, and TORC2 pathways. Also acts as a key regulator of actin-driven membrane protrusions during processes such as phagocytosis and cytokinesis, possibly by modulating rapA signaling pathways. This is Ras guanine nucleotide exchange factor glfB from Dictyostelium discoideum (Social amoeba).